Here is a 1055-residue protein sequence, read N- to C-terminus: MSKQRKKADLATVLRKSWYHLRLSVRHPTRVPTWDAIVLTAASPEQAELYDWQLRRAKRMGRIASSTVTLAVPDPDGKRIGSGAATLNAIYALARHYEKLGFDLGPEMEVANGACKWVRFISAKHVLMLHAGGDSKRVPWANPMGKVFLPLPYLAADDPDGPVPLLFDHILAIASCARQAFQDQGGLFIMTGDVLPCFDAFKMTLPEDAASIVTVPITLDIASNHGVIVTSKSESLAESYTVSLVNDLLQKPTVEDLVKKDAILHDGRTLLDTGIISARGRAWSDLVALGCSCQPMILELIGSKKEMSLYEDLVAAWVPSRHDWLRTRPLGELLVNSLGRQKMYSYCTYDLQFLHFGTSSEVLDHLSGDASGIVGRRHLCSIPATTVSDIAASSVILSSEIAPGVSIGEDSLIYDSTVSGAVQIGSQSIVVGIHIPSEDLGTPESFRFMLPDRHCLWEVPLVGHKGRVIVYCGLHDNPKNSIHKDGTFCGKPLEKVLFDLGIEESDLWSSYVAQDRCLWNAKLFPILTYSEMLKLASWLMGLDDSRNKEKIKLWRSSQRVSLEELHGSINFPEMCNGSSNHQADLAGGIAKACMNYGMLGRNLSQLCHEILQKESLGLEICKNFLDQCPKFQEQNSKILPKSRAYQVEVDLLRACGDEAKAIELEHKVWGAVAEETASAVRYGFREHLLESSGKSHSENHISHPDRVFQPRRTKVELPVRVDFVGGWSDTPPWSLERAGYVLNMAITLEGSLPIGTIIETTNQMGISIQDDAGNELHIEDPISIKTPFEVNDPFRLVKSALLVTGIVQENFVDSTGLAIKTWANVPRGSGLGTSSILAAAVVKGLLQISNGDESNENIARLVLVLEQLMGTGGGWQDQIGGLYPGIKFTSSFPGIPMRLQVVPLLASPQLISELEQRLLVVFTGQVRLAHQVLHKVVTRYLQRDNLLISSIKRLTELAKSGREALMNCEVDEVGDIMSEAWRLHQELDPYCSNEFVDKLFEFSQPYSSGFKLVGAGGGGFSLILAKDAEKAKELRQRLEEHAEFDVKVYNWSICI.

A GDP-fucose pyrophosphorylase region spans residues 34 to 565 (WDAIVLTAAS…SSQRVSLEEL (532 aa)). The L-fucokinase stretch occupies residues 693-1055 (GKSHSENHIS…VKVYNWSICI (363 aa)). 826-836 (PRGSGLGTSSI) lines the ATP pocket.

It belongs to the GHMP kinase family. It depends on Mn(2+) as a cofactor. Mg(2+) is required as a cofactor. As to expression, ubiquitous. Highest expression in flower buds.

The catalysed reaction is L-fucose + ATP = beta-L-fucose 1-phosphate + ADP + H(+). The enzyme catalyses beta-L-fucose 1-phosphate + GTP + H(+) = GDP-beta-L-fucose + diphosphate. In terms of biological role, bifunctional enzyme involved in the salvage pathway which converts free L-fucose to GDP-L-fucose. Catalyzes two successive reactions, the ATP-dependent phosphorylation of L-fucose to L-fucose 1-phosphate, and its guanylylation to GDP-L-fucose. The sugar-1-kinase activity has a strict substrate specificity for L-fucose and ATP. The pyrophosphorylase activity has a strict substrate specificity for L-fucose 1-phosphate and GTP. This chain is Bifunctional fucokinase/GDP-fucose pyrophosphorylase (FKGP), found in Arabidopsis thaliana (Mouse-ear cress).